The chain runs to 358 residues: Phospho-N-acetylmuramoyl-pentapeptide-transferase (358 aa).

The next 10 membrane-spanning stretches (helical) occupy residues 13–47 (LFIL…SIFI), 81–101 (MGGI…TINL), 106–126 (LILL…DDYL), 148–168 (ISII…LITI), 171–191 (SWAI…LVGI), 201–221 (LDGL…TEIL), 228–248 (LFVF…FLKY), 255–275 (IFMG…IALL), 278–298 (SIFT…SVII), and 336–356 (IVEN…VLKI).

The protein belongs to the glycosyltransferase 4 family. MraY subfamily. The cofactor is Mg(2+).

The protein localises to the cell inner membrane. It carries out the reaction UDP-N-acetyl-alpha-D-muramoyl-L-alanyl-gamma-D-glutamyl-meso-2,6-diaminopimeloyl-D-alanyl-D-alanine + di-trans,octa-cis-undecaprenyl phosphate = di-trans,octa-cis-undecaprenyl diphospho-N-acetyl-alpha-D-muramoyl-L-alanyl-D-glutamyl-meso-2,6-diaminopimeloyl-D-alanyl-D-alanine + UMP. Its pathway is cell wall biogenesis; peptidoglycan biosynthesis. Functionally, catalyzes the initial step of the lipid cycle reactions in the biosynthesis of the cell wall peptidoglycan: transfers peptidoglycan precursor phospho-MurNAc-pentapeptide from UDP-MurNAc-pentapeptide onto the lipid carrier undecaprenyl phosphate, yielding undecaprenyl-pyrophosphoryl-MurNAc-pentapeptide, known as lipid I. The protein is Phospho-N-acetylmuramoyl-pentapeptide-transferase of Prochlorococcus marinus (strain MIT 9301).